The sequence spans 187 residues: MAALQSSFAGLSTSFFGQRFSPPLSLPPLVKSTEGPCLIQAKLKRWERKECKPNSLPVLHKMHVKLGDTVKIISGHDKGKVGEITEIIKHNSKVVVKDVNLKTKHVKSRSEDEPGQIVKIEAPIHSSNVMLYSKEQKVASRVGHKTLDNGKRVRYLIKTGEIIDSAENWKKAVKEKEKTTEAVAAAS.

A chloroplast-targeting transit peptide spans Met-1 to Ala-41.

The protein belongs to the universal ribosomal protein uL24 family. As to quaternary structure, part of the 50S ribosomal subunit.

The protein localises to the plastid. It localises to the chloroplast. Its function is as follows. One of two assembly initiator proteins, it binds directly to the 5'-end of the 23S rRNA, where it nucleates assembly of the 50S subunit. The polypeptide is Large ribosomal subunit protein uL24c (RPL24) (Nicotiana tabacum (Common tobacco)).